The primary structure comprises 637 residues: MSERIEWLEDGTAGGSPYSPRFGDRYRSELGGLEQAREVFLKGCGLPNAWAGQPQWCVLETGFGLGLNFLVTWAAWKADPLRPRLLHFVSTEAYPASADDVLRSALTHPELIPFAEQLKRQLWGLLPGVHRLVFEGGQVLLTLCIGDTKAMLREPSFEADSVYLDGFSPQRNPDIWDVHTFKAVARCCRRGTRIATWTIARSVRDALAQCGFVVKKVPGTPPKRDNLQGEYQPAWEVKKSRITPERKAPARCIVIGAGLAGSAVAASLARRGWQVTVLDAASTPAAGASGLPAGVLAPHVSPDDSLLSRLSRSGIRAMLQQADALLQTNIDWSPTGVLEHCVEHARQLPAAWHPGQALADAAGDWTRPATSEQLKHCGLSPETPALWHVQAGWIKPARLVQAWLSSPGVSWHGNAAVSQLVRQAGAWQALDATGNELASAELVVLAAGHGSRALSEIASPQAGRPLALQAIRGQASWGLHAPGTEQAMPAFPVNGHGSLVPRVPLEQGLAWVTGSSFERDNTSPQLRPEDEQHNFGKLKTLLPAAAQALTAQFESGQVRGWTGVRCATPSRLPALGPLENAQDVWVCSGMGSRGLTFAALCAELLAARLHGEPLPVELRQADALLPQYATRLQPSGS.

The disordered stretch occupies residues 1 to 20 (MSERIEWLEDGTAGGSPYSP). The segment at 1 to 232 (MSERIEWLED…KRDNLQGEYQ (232 aa)) is tRNA (mnm(5)s(2)U34)-methyltransferase. The segment at 255–637 (IGAGLAGSAV…YATRLQPSGS (383 aa)) is FAD-dependent cmnm(5)s(2)U34 oxidoreductase.

In the N-terminal section; belongs to the methyltransferase superfamily. tRNA (mnm(5)s(2)U34)-methyltransferase family. This sequence in the C-terminal section; belongs to the DAO family. FAD is required as a cofactor.

The protein resides in the cytoplasm. The catalysed reaction is 5-aminomethyl-2-thiouridine(34) in tRNA + S-adenosyl-L-methionine = 5-methylaminomethyl-2-thiouridine(34) in tRNA + S-adenosyl-L-homocysteine + H(+). Its function is as follows. Catalyzes the last two steps in the biosynthesis of 5-methylaminomethyl-2-thiouridine (mnm(5)s(2)U) at the wobble position (U34) in tRNA. Catalyzes the FAD-dependent demodification of cmnm(5)s(2)U34 to nm(5)s(2)U34, followed by the transfer of a methyl group from S-adenosyl-L-methionine to nm(5)s(2)U34, to form mnm(5)s(2)U34. The polypeptide is tRNA 5-methylaminomethyl-2-thiouridine biosynthesis bifunctional protein MnmC (Polaromonas naphthalenivorans (strain CJ2)).